Consider the following 144-residue polypeptide: MAKTAQFYILTENCTLTVEEIACNLAASIWRSGKKVLISCESEAQALEIDERLWQRDPNEFVPHNLSGEATQYPTPIEISWLGKRNLQRRDLLINLQQEIPDFSHSFTQIIDFVPKDDALKTQARERYKQLRLQGWNLSTENVG.

This sequence belongs to the DNA polymerase III chi/HolC chain family. As to quaternary structure, DNA polymerase III contains a core (composed of alpha, epsilon and theta chains) that associates with a tau subunit. This core dimerizes to form the POLIII' complex. PolIII' associates with the gamma complex (composed of gamma, delta, delta', psi and chi chains) and with the beta chain to form the complete DNA polymerase III complex. Interacts directly with the psi subunit (holD). The only subunit of the DNA polymerase III holoenzyme known to interact with single-stranded DNA binding protein (SSB), interacts directly with DNA helicase YoaA.

It carries out the reaction DNA(n) + a 2'-deoxyribonucleoside 5'-triphosphate = DNA(n+1) + diphosphate. In terms of biological role, part of the beta sliding clamp loading complex, which hydrolyzes ATP to load the beta clamp onto primed DNA to form the DNA replication pre-initiation complex. DNA polymerase III is a complex, multichain enzyme responsible for most of the replicative synthesis in bacteria. This DNA polymerase also exhibits 3' to 5' exonuclease activity. This subunit may stabilize YoaA and/or stimulate the helicase activity of YoaA. This is DNA polymerase III subunit chi (holC) from Haemophilus influenzae (strain ATCC 51907 / DSM 11121 / KW20 / Rd).